Here is a 239-residue protein sequence, read N- to C-terminus: Guanylate kinase (239 aa).

One can recognise a Guanylate kinase-like domain in the interval 19 to 197 (GLLIVVTGAS…AVSELLAVQQ (179 aa)). 26–33 (GASGVGKG) contacts ATP.

This sequence belongs to the guanylate kinase family.

The protein localises to the cytoplasm. It catalyses the reaction GMP + ATP = GDP + ADP. Essential for recycling GMP and indirectly, cGMP. This Deinococcus radiodurans (strain ATCC 13939 / DSM 20539 / JCM 16871 / CCUG 27074 / LMG 4051 / NBRC 15346 / NCIMB 9279 / VKM B-1422 / R1) protein is Guanylate kinase (gmk).